The chain runs to 284 residues: Putative L-ribulose-5-phosphate 3-epimerase UlaE (284 aa).

Belongs to the L-ribulose-5-phosphate 3-epimerase family.

It catalyses the reaction L-ribulose 5-phosphate = L-xylulose 5-phosphate. Its pathway is cofactor degradation; L-ascorbate degradation; D-xylulose 5-phosphate from L-ascorbate: step 3/4. Its function is as follows. Catalyzes the isomerization of L-xylulose-5-phosphate to L-ribulose-5-phosphate. Is involved in the anaerobic L-ascorbate utilization. The polypeptide is Putative L-ribulose-5-phosphate 3-epimerase UlaE (Shigella dysenteriae serotype 1 (strain Sd197)).